A 213-amino-acid chain; its full sequence is Thiopurine S-methyltransferase (213 aa).

The S-adenosyl-L-methionine site is built by Trp-10, Met-45, Glu-66, and Arg-120.

It belongs to the class I-like SAM-binding methyltransferase superfamily. TPMT family.

It localises to the cytoplasm. It carries out the reaction S-adenosyl-L-methionine + a thiopurine = S-adenosyl-L-homocysteine + a thiopurine S-methylether.. In Photobacterium profundum (strain SS9), this protein is Thiopurine S-methyltransferase.